Consider the following 217-residue polypeptide: MQIFLDSTDTKVIADLASTGLVDGVTTNPTLIAKSGRPMLEVIAEICDLVPGPISAEVAATTHEAMVAEGRKLAAIAPNVVVKIPLTRDGLIACAAFAGEGISTNVTLCFSPTQALLAAKAGATYVSPFIGRLDDYGFDGMDLIRDIRAIYDNYGYETEILAASVRNVTHVKDAAIVGADVVTIPPATFSDLFKHPLTDKGLEQFLKDWAGTGQSIL.

Residue Lys83 is the Schiff-base intermediate with substrate of the active site.

It belongs to the transaldolase family. Type 3B subfamily.

The protein resides in the cytoplasm. The enzyme catalyses D-sedoheptulose 7-phosphate + D-glyceraldehyde 3-phosphate = D-erythrose 4-phosphate + beta-D-fructose 6-phosphate. It functions in the pathway carbohydrate degradation; pentose phosphate pathway; D-glyceraldehyde 3-phosphate and beta-D-fructose 6-phosphate from D-ribose 5-phosphate and D-xylulose 5-phosphate (non-oxidative stage): step 2/3. Its function is as follows. Transaldolase is important for the balance of metabolites in the pentose-phosphate pathway. The chain is Probable transaldolase from Caulobacter sp. (strain K31).